Here is a 139-residue protein sequence, read N- to C-terminus: FAD synthase (139 aa).

ATP-binding positions include 9–10, 14–17, and aspartate 92; these read TF and HPGH.

Belongs to the archaeal FAD synthase family. In terms of assembly, homodimer. It depends on a divalent metal cation as a cofactor.

The catalysed reaction is FMN + ATP + H(+) = FAD + diphosphate. It functions in the pathway cofactor biosynthesis; FAD biosynthesis; FAD from FMN: step 1/1. Catalyzes the transfer of the AMP portion of ATP to flavin mononucleotide (FMN) to produce flavin adenine dinucleotide (FAD) coenzyme. This Methanosarcina barkeri (strain Fusaro / DSM 804) protein is FAD synthase.